We begin with the raw amino-acid sequence, 583 residues long: Ribonuclease ZC3H12A (583 aa).

Positions 1–11 (MSLWELEDRRS) are enriched in basic and acidic residues. Disordered stretches follow at residues 1-29 (MSLW…EATT) and 73-119 (GSAA…GSDL). The segment covering 15 to 29 (TPRPAQEPTAEEATT) has biased composition (low complexity). The tract at residues 26–71 (EATTAELQMKVDFFRKLGYSSAEIHSVLQKLGIQADTNTVLGELVK) is ubiquitin association domain. The interval 65-134 (VLGELVKHGS…DGSNVAMSHG (70 aa)) is necessary for interaction with TANK. Residues 73–82 (GSAAERERQA) are compositionally biased toward basic and acidic residues. Residue S83 is modified to Phosphoserine. An RNase region spans residues 96–281 (GGGTPKAPTV…LDNFLRKKPL (186 aa)). The RNase NYN domain maps to 119–274 (LRPIVIDGSN…LGRHGPSLDN (156 aa)). Residues 198 to 204 (RRVGGKR) are RNA binding. D210 contributes to the Mg(2+) binding site. Disordered stretches follow at residues 262–290 (DDPL…KQPC) and 323–404 (ANAL…PSEW). Residues 284–309 (EHKKQPCPYGRKCTYGIKCRFLHPER) form a C3H1-type zinc finger. Positions 285–441 (HKKQPCPYGR…SELWGVRGGG (157 aa)) are necessary for interaction with ZC3H12D. Residues 341 to 352 (RPSPSSQPGSLP) show a composition bias toward low complexity. Residues 353-364 (TEHEQCSPDRKK) are compositionally biased toward basic and acidic residues. Low complexity predominate over residues 384–393 (PTGRSLPPSG). A phosphoserine mark is found at S422 and S426. Residues 503-530 (YQLPPPTQRLQEPQAPGPGADRGPWGGA) form a disordered region.

This sequence belongs to the ZC3H12 family. Oligomer. Found in a deubiquitination complex with TANK, USP10 and ZC3H12A; this complex inhibits genotoxic stress- or interleukin-1-beta-mediated NF-kappaB activation by promoting IKBKG or TRAF6 deubiquitination. Interacts with IKBKG; this interaction increases in response to DNA damage. Interacts with TANK; this interaction increases in response to DNA damage and serves as a bridge to anchor both TANK and USP10 into a deubiquitinating complex. Interacts with TRAF6; this interaction increases in response to DNA damage and is stimulated by TANK. Interacts with USP10; this interaction increases in response to DNA damage and serves as a bridge to anchor both TANK and USP10 into a deubiquitinating complex. Interacts with ZC3H12D. Interacts with TNRC6A. Interacts with IKBKB/IKKB. Interacts with IKBKB/IKKB. Interacts with BTRC; the interaction occurs when ZC3H12A is phosphorylated in a IKBKB/IKKB-dependent manner. Interacts with IRAK1; this interaction increases the interaction between ZC3H12A and IKBKB/IKKB. Interacts with UPF1; this interaction occurs in a mRNA translationally active- and termination-dependent manner and is essential for ZC3H12A-mediated degradation of target mRNAs. Associates with ribosomes. Interacts with ubiquitin. Mg(2+) is required as a cofactor. Phosphorylated by IRAK1; phosphorylation is necessary for subsequent phosphorylation by the I-kappa-B-kinase (IKK) complex. Phosphorylated by I-kappa-B-kinase (IKK) subunits IKBKB/IKKB and CHUK/IKKA at Ser-422 and Ser-426; these phosphorylations promote ubiquitin proteasome-mediated degradation of ZC3H12A and hence facilitates rapid and robust production of IL-6 mRNA in response to toll-like receptor (TLR) or IL-1 receptor stimuli. Post-translationally, ubiquitinated; ubiquitination is induced in response to interleukin IL1 receptor stimuli in a IKBKB/IKKB and IRAK1-dependent manner, leading to proteasome-mediated degradation. In terms of processing, proteolytically cleaved between Arg-95 and Arg-198 by MALT1 in activated T-cells; cleavage at Arg-95 is critical for promoting ZC3H12A degradation in response to T-cell receptor (TCR) stimulation, and hence is necessary for prolonging the stability of a set of mRNAs controlling T-cell activation and Th17 cell differentiation.

Its subcellular location is the nucleus. It localises to the cytoplasm. The protein localises to the P-body. It is found in the rough endoplasmic reticulum membrane. The protein resides in the cytoplasmic granule. Functionally, endoribonuclease involved in various biological functions such as cellular inflammatory response and immune homeostasis, glial differentiation of neuroprogenitor cells, cell death of cardiomyocytes, adipogenesis and angiogenesis. Functions as an endoribonuclease involved in mRNA decay. Modulates the inflammatory response by promoting the degradation of a set of translationally active cytokine-induced inflammation-related mRNAs, such as IL6 and IL12B, during the early phase of inflammation. Prevents aberrant T-cell-mediated immune reaction by degradation of multiple mRNAs controlling T-cell activation, such as those encoding cytokines (IL6 and IL2), cell surface receptors (ICOS, TNFRSF4 and TNFR2) and transcription factor (REL). Inhibits cooperatively with ZC3H12A the differentiation of helper T cells Th17 in lungs. They repress target mRNA encoding the Th17 cell-promoting factors IL6, ICOS, REL, IRF4, NFKBID and NFKBIZ. The cooperation requires RNA-binding by RC3H1 and the nuclease activity of ZC3H12A. Together with RC3H1, destabilizes TNFRSF4/OX40 mRNA by binding to the conserved stem loop structure in its 3'UTR. Self regulates by destabilizing its own mRNA. Cleaves mRNA harboring a stem-loop (SL), often located in their 3'-UTRs, during the early phase of inflammation in a helicase UPF1-dependent manner. Plays a role in the inhibition of microRNAs (miRNAs) biogenesis. Cleaves the terminal loop of a set of precursor miRNAs (pre-miRNAs) important for the regulation of the inflammatory response leading to their degradation, and thus preventing the biosynthesis of mature miRNAs. Also plays a role in promoting angiogenesis in response to inflammatory cytokines by inhibiting the production of antiangiogenic microRNAs via its anti-dicer RNase activity. Affects the overall ubiquitination of cellular proteins. Positively regulates deubiquitinase activity promoting the cleavage at 'Lys-48'- and 'Lys-63'-linked polyubiquitin chains on TNF receptor-associated factors (TRAFs), preventing JNK and NF-kappa-B signaling pathway activation, and hence negatively regulating macrophage-mediated inflammatory response and immune homeostasis. Also induces deubiquitination of the transcription factor HIF1A, probably leading to its stabilization and nuclear import, thereby positively regulating the expression of proangiogenic HIF1A-targeted genes. Involved in a TANK-dependent negative feedback response to attenuate NF-kappaB activation through the deubiquitination of IKBKG or TRAF6 in response to interleukin-1-beta (IL1B) stimulation or upon DNA damage. Prevents stress granules (SGs) formation and promotes macrophage apoptosis under stress conditions, including arsenite-induced oxidative stress, heat shock, and energy deprivation. Plays a role in the regulation of macrophage polarization; promotes IL4-induced polarization of macrophages M1 into anti-inflammatory M2 state. May also act as a transcription factor that regulates the expression of multiple genes involved in inflammatory response, angiogenesis, adipogenesis and apoptosis. Functions as a positive regulator of glial differentiation of neuroprogenitor cells through an amyloid precursor protein (APP)-dependent signaling pathway. Attenuates septic myocardial contractile dysfunction in response to lipopolysaccharide (LPS) by reducing I-kappa-B-kinase (IKK)-mediated NF-kappa-B activation, and hence myocardial pro-inflammatory cytokine production. The polypeptide is Ribonuclease ZC3H12A (Bos taurus (Bovine)).